Here is a 254-residue protein sequence, read N- to C-terminus: MKIGIFDSGVGGLTVLKAIRNRYRKVDIVYLGDTARVPYGIRSKDTIIRYSLECAGFLKDKGVDIIVVACNTASAYALERLKKEINVPVFGVIEPGVKEALKKSRNKKIGVIGTPATVKSGAYQRKLEEGGADVFAKACPLFVPLAEEGLLEGEITRKVVEHYLKEFKGKIDTLILGCTHYPLLKKEIKKFLGDVEVVDSSEALSLSLHNFIKDDGSSSLELFFTDLSPNLQFLIKLILGRDYPVKLAEGVFTH.

Substrate contacts are provided by residues 7 to 8 (DS) and 39 to 40 (YG). Cysteine 70 acts as the Proton donor/acceptor in catalysis. Residues 71-72 (NT) and glutamate 147 each bind substrate. Catalysis depends on cysteine 178, which acts as the Proton donor/acceptor. 179–180 (TH) contributes to the substrate binding site.

It belongs to the aspartate/glutamate racemases family. Homodimer.

The catalysed reaction is L-glutamate = D-glutamate. It functions in the pathway cell wall biogenesis; peptidoglycan biosynthesis. Its function is as follows. Provides the (R)-glutamate required for cell wall biosynthesis. Converts L- or D-glutamate to D- or L-glutamate, respectively, but not other amino acids such as alanine, aspartate, and glutamine. The sequence is that of Glutamate racemase from Aquifex pyrophilus.